Here is a 295-residue protein sequence, read N- to C-terminus: Probable CBASS effector molecule IK1_05631 (295 aa).

4 helical membrane-spanning segments follow: residues 26 to 46 (IFYA…ISIY), 56 to 76 (SNTG…AYQI), 167 to 187 (ILLF…GFFV), and 190 to 210 (SMQE…IYGF).

Its subcellular location is the cell membrane. Functionally, effector protein of a CBASS antiviral system. CBASS (cyclic oligonucleotide-based antiphage signaling system) provides immunity against bacteriophage. The CD-NTase protein synthesizes cyclic nucleotides in response to infection; these serve as specific second messenger signals. The signals activate a diverse range of effectors, leading to bacterial cell death and thus abortive phage infection. A type I-B CBASS system. In terms of biological role, protects B.subtilis against phage infection. When IK1_05630 and IK1_05631 are introduced in B.subtilis BEST7003 there is 1000-fold protection against phage SBSphiC. Both genes are required for protection. Activation leads to bacterial cell lysis and death, which occurs before the phage has finished its replication cycle, thus protecting non-infected bacteria by aborting the phage infection and preventing its propagation. The protein is Probable CBASS effector molecule IK1_05631 of Bacillus cereus (strain VD146).